A 422-amino-acid polypeptide reads, in one-letter code: Roquefortine prenyltransferase roqD (422 aa).

Glu100 serves as a coordination point for substrate. Dimethylallyl diphosphate-binding residues include Arg113, Lys200, and Tyr202. Tyr204 contributes to the substrate binding site. Dimethylallyl diphosphate-binding residues include Lys268, Tyr270, Tyr353, Tyr416, and Tyr420.

Belongs to the tryptophan dimethylallyltransferase family.

Its pathway is alkaloid biosynthesis. Roquefortine prenyltransferase; part of the gene cluster that mediates the biosynthesis of the mycotoxins roquefortine C and meleagrin. The first stage is catalyzed by the dipeptide synthase roqA which condenses histidine and tryptophan to produce histidyltryptophanyldiketopiperazine (HTD). HTD is then converted to roquefortine C through two possible pathways. In the first pathway, prenyltransferase roqD transforms HTD to the intermediate roquefortine D, which is in turn converted to roquefortine C by the cytochrome P450 monooxygenase roqR. In the second pathway, HTD is first converted to the intermediate dehydrohistidyltryptophanyldi-ketopiperazine (DHTD) by roqR which is then prenylated by roqD to form roquefortine C. Roquefortine C can be further transformed to meleagrin via three more reactions including oxydation to glandicolin A by roqM, which is further reduced to glandicoline B by roqO. Finally, glandicoline B is converted to meleagrin by the glandicoline B O-methyltransferase roqN. More studies identified further branching and additional metabolites produced by the roquefortine/meleagrin cluster, including roquefortine F, roquefortine L, roquefortine M, roquefortine N and neoxaline. The chain is Roquefortine prenyltransferase roqD from Penicillium rubens (strain ATCC 28089 / DSM 1075 / NRRL 1951 / Wisconsin 54-1255) (Penicillium chrysogenum).